The following is a 287-amino-acid chain: Bifunctional protein FolD (287 aa).

NADP(+)-binding positions include 169 to 171 (GRS) and Ser-194.

It belongs to the tetrahydrofolate dehydrogenase/cyclohydrolase family. In terms of assembly, homodimer.

The catalysed reaction is (6R)-5,10-methylene-5,6,7,8-tetrahydrofolate + NADP(+) = (6R)-5,10-methenyltetrahydrofolate + NADPH. It carries out the reaction (6R)-5,10-methenyltetrahydrofolate + H2O = (6R)-10-formyltetrahydrofolate + H(+). The protein operates within one-carbon metabolism; tetrahydrofolate interconversion. In terms of biological role, catalyzes the oxidation of 5,10-methylenetetrahydrofolate to 5,10-methenyltetrahydrofolate and then the hydrolysis of 5,10-methenyltetrahydrofolate to 10-formyltetrahydrofolate. This Albidiferax ferrireducens (strain ATCC BAA-621 / DSM 15236 / T118) (Rhodoferax ferrireducens) protein is Bifunctional protein FolD.